Here is a 179-residue protein sequence, read N- to C-terminus: Small ribosomal subunit protein uS5 (179 aa).

Residues Met-22–Val-85 form the S5 DRBM domain.

Belongs to the universal ribosomal protein uS5 family. As to quaternary structure, part of the 30S ribosomal subunit. Contacts proteins S4 and S8.

Functionally, with S4 and S12 plays an important role in translational accuracy. In terms of biological role, located at the back of the 30S subunit body where it stabilizes the conformation of the head with respect to the body. This Xylella fastidiosa (strain M12) protein is Small ribosomal subunit protein uS5.